Consider the following 268-residue polypeptide: Ribosomal RNA small subunit methyltransferase A (268 aa).

S-adenosyl-L-methionine contacts are provided by N23, I25, G50, E72, D97, and N116.

This sequence belongs to the class I-like SAM-binding methyltransferase superfamily. rRNA adenine N(6)-methyltransferase family. RsmA subfamily.

It localises to the cytoplasm. It catalyses the reaction adenosine(1518)/adenosine(1519) in 16S rRNA + 4 S-adenosyl-L-methionine = N(6)-dimethyladenosine(1518)/N(6)-dimethyladenosine(1519) in 16S rRNA + 4 S-adenosyl-L-homocysteine + 4 H(+). In terms of biological role, specifically dimethylates two adjacent adenosines (A1518 and A1519) in the loop of a conserved hairpin near the 3'-end of 16S rRNA in the 30S particle. May play a critical role in biogenesis of 30S subunits. The chain is Ribosomal RNA small subunit methyltransferase A from Rickettsia prowazekii (strain Madrid E).